The sequence spans 329 residues: GTPase Obg (329 aa).

The 159-residue stretch at 1–159 folds into the Obg domain; that stretch reads MQFIDQARIT…WFLQLELKLL (159 aa). An OBG-type G domain is found at 160–328; sequence AEVGIIGLPN…LLAQVWKELG (169 aa). ATP contacts are provided by residues 166 to 173, 191 to 195, 213 to 216, 280 to 283, and 309 to 311; these read GLPNAGKS, FTTLV, DIPG, NKQE, and SAA. Positions 173 and 193 each coordinate Mg(2+).

The protein belongs to the TRAFAC class OBG-HflX-like GTPase superfamily. OBG GTPase family. As to quaternary structure, monomer. It depends on Mg(2+) as a cofactor.

It is found in the cytoplasm. In terms of biological role, an essential GTPase which binds GTP, GDP and possibly (p)ppGpp with moderate affinity, with high nucleotide exchange rates and a fairly low GTP hydrolysis rate. Plays a role in control of the cell cycle, stress response, ribosome biogenesis and in those bacteria that undergo differentiation, in morphogenesis control. This Prochlorococcus marinus (strain MIT 9313) protein is GTPase Obg.